Consider the following 714-residue polypeptide: Mitochondrial division protein 1 (714 aa).

Positions 240–298 (LNIQKNSTLSEIRDIEVEVENLRQKKEKLLGKIANIEQNQLLLEDNLKQIDDRLDFLEE) form a coiled coil. The segment at 323–354 (LKNDAIRNEGVTTESISSEASNLPPRRRQQLR) is disordered. Polar residues predominate over residues 332–343 (GVTTESISSEAS). Ser-376 is subject to Phosphoserine. WD repeat units lie at residues 396–436 (THDD…KIGE), 439–478 (GHLA…QLYQ), 500–539 (AHTD…QTID), 561–603 (TQRN…RTLK), 604–642 (GHTD…NKFH), 644–681 (YSAP…SWSC), and 685–714 (GNET…IWAV).

This sequence belongs to the WD repeat MDV1/CAF4 family. In terms of assembly, interacts with CAF4, DNM1 and FIS1, components of the mitochondrial fission machinery. Interacts via its N-terminal, coiled-coil extension (NTE) with FIS1, and via its WD repeats with DNM1.

The protein resides in the mitochondrion outer membrane. Involved in mitochondrial fission. Has a partially redundant function to CAF4 in acting as an adapter protein, binding to FIS1 on the mitochondrial outer membrane and recruiting the dynamin-like GTPase DNM1 to form mitochondrial fission complexes. Formation of these complexes is required to promote constriction and fission of the mitochondrial compartment at a late step in mitochondrial division. The sequence is that of Mitochondrial division protein 1 (MDV1) from Saccharomyces cerevisiae (strain ATCC 204508 / S288c) (Baker's yeast).